We begin with the raw amino-acid sequence, 72 residues long: Dermaseptin-A4 (72 aa).

An N-terminal signal peptide occupies residues 1-22; it reads MAFLKKSLFLVLFLGMVSLSIC. Positions 23–41 are excised as a propeptide; sequence EEEKREEENEQEDDEQSEE. The segment at 24-43 is disordered; the sequence is EEKREEENEQEDDEQSEEKR. A compositionally biased stretch (acidic residues) spans 30–39; that stretch reads ENEQEDDEQS. At alanine 69 the chain carries Alanine amide. Positions 71 to 72 are excised as a propeptide; that stretch reads EQ.

Belongs to the frog skin active peptide (FSAP) family. Dermaseptin subfamily. Expressed by the skin glands.

Its subcellular location is the secreted. In terms of biological role, possesses a potent antimicrobial activity against Gram-positive and Gram-negative bacteria. Probably acts by disturbing membrane functions with its amphipathic structure. This is Dermaseptin-A4 from Agalychnis annae (Blue-sided leaf frog).